The following is a 149-amino-acid chain: Calmodulin-2 (149 aa).

A2 carries the post-translational modification N-acetylalanine. 4 consecutive EF-hand domains span residues 8–43, 44–79, 81–116, and 117–149; these read EQIA…LGQN, PTEA…KMKD, DSEE…LGEK, and LTDE…MMAK. Ca(2+) is bound by residues D21, D23, D25, C27, E32, D57, D59, N61, T63, E68, D94, D96, N98, and E105. N6,N6,N6-trimethyllysine is present on K116. Positions 130, 132, 134, 136, and 141 each coordinate Ca(2+).

The protein belongs to the calmodulin family.

Its function is as follows. Calmodulin mediates the control of a large number of enzymes, ion channels and other proteins by Ca(2+). Among the enzymes to be stimulated by the calmodulin-Ca(2+) complex are a number of protein kinases and phosphatases. This is Calmodulin-2 (CAM2) from Oryza sativa subsp. indica (Rice).